The sequence spans 500 residues: V-type proton ATPase subunit B (500 aa).

This sequence belongs to the ATPase alpha/beta chains family. As to quaternary structure, V-ATPase is a heteromultimeric enzyme composed of a peripheral catalytic V1 complex (main components: subunits A, B, C, D, E, and F) attached to an integral membrane V0 proton pore complex (main component: the proteolipid protein).

Non-catalytic subunit of the peripheral V1 complex of vacuolar ATPase. V-ATPase is responsible for acidifying a variety of intracellular compartments in eukaryotic cells. The polypeptide is V-type proton ATPase subunit B (Cyanidium caldarium (Red alga)).